A 245-amino-acid chain; its full sequence is MKIDVLTLFPKMVEVPLHESIVGKAIEAGKLNVDVTDFRQYSTNKHGNVDDYPYGGGAGMLLTPQPIFDAMEHVKSQNNQSTGRVILVDPGGKQFNQTMAEDFAKEEHLTFICGHYEGYDERIKTLVDDEVSLGDFVITGGELAALTMIDATVRLLPDILGNKDSAVDDSFSTGLLEFPQYTRPEDFRGLKVPSILLSGNHGKIDEWRRTESLKKTLARRPDLLETAQLTPEDKQILRELQTPDL.

S-adenosyl-L-methionine contacts are provided by residues glycine 114 and 133–138; that span reads LGDFVI.

The protein belongs to the RNA methyltransferase TrmD family. As to quaternary structure, homodimer.

Its subcellular location is the cytoplasm. It catalyses the reaction guanosine(37) in tRNA + S-adenosyl-L-methionine = N(1)-methylguanosine(37) in tRNA + S-adenosyl-L-homocysteine + H(+). Functionally, specifically methylates guanosine-37 in various tRNAs. The sequence is that of tRNA (guanine-N(1)-)-methyltransferase from Pediococcus pentosaceus (strain ATCC 25745 / CCUG 21536 / LMG 10740 / 183-1w).